The primary structure comprises 41 residues: MQVLSSLKTAKQRHRDCQIVRRRGKVYVICKSNPRFKARQR.

This sequence belongs to the bacterial ribosomal protein bL36 family.

In Neisseria meningitidis serogroup B (strain ATCC BAA-335 / MC58), this protein is Large ribosomal subunit protein bL36B.